Reading from the N-terminus, the 84-residue chain is Perlustrin (84 aa).

The IGFBP N-terminal domain maps to 1 to 82 (LSCASCENAA…LDFKGVCARV (82 aa)). Cystine bridges form between C3/C28, C6/C30, C11/C31, C18/C34, C42/C55, and C49/C79.

In terms of tissue distribution, shell.

In terms of biological role, binds human IGF1 and IGF2 and bovine insulin. The protein is Perlustrin of Haliotis laevigata (Smooth Australian abalone).